A 153-amino-acid polypeptide reads, in one-letter code: Ribosome maturation factor RimP (153 aa).

The protein belongs to the RimP family.

The protein localises to the cytoplasm. Functionally, required for maturation of 30S ribosomal subunits. In Nostoc punctiforme (strain ATCC 29133 / PCC 73102), this protein is Ribosome maturation factor RimP.